A 407-amino-acid chain; its full sequence is MMEKHFVGSEIGQLRSVMLHRPNLSLKRLTPSNCQELLFDDVLSVERAGEEHDIFANTLRQQGIEVLLLTDLLTQTLDVADAKAWLLDTQISDYRLGPTFAADIRAWLADMPHRELARHLSGGLTYGEIPASIKNMVVDTHDINDFIMKPLPNHLFTRDTSCWIYNGVSINPMAKPARQRETNNLRAIYRWHPQFAGGDFIKYFGDEDINYDHATLEGGDVLVIGRGAVLIGMSERTTPQGVEFLAQALFKHRQAERVIAVELPKHRSCMHLDTVMTHIDIDTFSVYPEVVRPDVQCWTLTPDGRGGLKRTQESTLVHALEKALGIDQVRLITTGGDAFEAEREQWNDANNVLTLRPGVVVGYERNIWTNEKYDKAGITVLPIPGDELGRGRGGARCMSCPLERDGI.

Cys397 (amidino-cysteine intermediate) is an active-site residue.

Belongs to the arginine deiminase family.

It is found in the cytoplasm. It catalyses the reaction L-arginine + H2O = L-citrulline + NH4(+). Its pathway is amino-acid degradation; L-arginine degradation via ADI pathway; carbamoyl phosphate from L-arginine: step 1/2. This Salmonella choleraesuis (strain SC-B67) protein is Arginine deiminase.